Here is an 850-residue protein sequence, read N- to C-terminus: Protein stoned-A (850 aa).

The segment covering 1 to 16 (MLKLPKGLKKKKKKSK) has biased composition (basic residues). Disordered regions lie at residues 1–95 (MLKL…AAGG) and 125–164 (KESF…LGQI). The interval 26 to 290 (ELEQYKRDLK…QNLLLSESIE (265 aa)) is interaction with Syt. Residues 28–38 (EQYKRDLKAKQ) are compositionally biased toward basic and acidic residues. The segment covering 78–91 (ILNAQQQLSDQNQG) has biased composition (polar residues). A compositionally biased stretch (basic and acidic residues) spans 136–164 (AEKKKQKEEEAARLEAEQQEREKQRLGQI). The short motif at 224 to 226 (DPF) is the DPF 1 element. 2 disordered regions span residues 345-375 (EEEE…EEDD) and 412-498 (GSWA…PPFL). Residues 431–440 (PPPPVRPPTG) are compositionally biased toward pro residues. Positions 451-462 (SEDEEENPEDDP) are enriched in acidic residues. 2 consecutive short sequence motifs (DPF) follow at residues 461 to 463 (DPF) and 535 to 537 (DPF). Disordered stretches follow at residues 573-610 (HSLS…QRKS), 634-673 (GNEL…TSHV), 738-760 (RKKL…FDTS), and 800-825 (LGLG…IDPF). Composition is skewed to basic and acidic residues over residues 574-588 (SLSD…DQKE) and 596-607 (LEQKETDFDTAQ). Short sequence motifs (DPF) lie at residues 666–668 (DPF), 755–757 (DPF), and 823–825 (DPF).

Interacts with the second C2 domain of Syt.

The protein localises to the cytoplasm. It localises to the synapse. Its subcellular location is the cytoplasmic vesicle. It is found in the secretory vesicle. The protein resides in the synaptic vesicle. Adapter protein involved in endocytic recycling of synaptic vesicles membranes. May act by mediating the retrieval of synaptotagmin protein Syt from the plasma membrane, thereby facilitating the internalization of multiple synaptic vesicles from the plasma membrane. This chain is Protein stoned-A (stnA), found in Drosophila melanogaster (Fruit fly).